Consider the following 541-residue polypeptide: Interleukin-18 receptor 1 (541 aa).

Residues 1-18 (MNCRELPLTLWVLISVST) form the signal peptide. Intrachain disulfides connect Cys22/Cys41 and Cys43/Cys81. The Extracellular segment spans residues 22–329 (CTSRPHITVV…ADIPGHVFTR (308 aa)). Ig-like C2-type domains are found at residues 33–121 (GEPF…SCFT), 133–212 (KKFF…DRSN), and 220–312 (PKLN…KSFI). 8 N-linked (GlcNAc...) asparagine glycosylation sites follow: Asn91, Asn102, Asn150, Asn197, Asn203, Asn236, Asn255, and Asn297. 2 disulfide bridges follow: Cys119–Cys158 and Cys140–Cys185. The cysteines at positions 237 and 298 are disulfide-linked. The helical transmembrane segment at 330 to 350 (GMIIAVLILVAVVCLVTVCVI) threads the bilayer. Topologically, residues 351–541 (YRVDLVLFYR…PEVLPVLSES (191 aa)) are cytoplasmic. The 148-residue stretch at 373 to 520 (KTYDAFVSYL…RFWKNLLYLM (148 aa)) folds into the TIR domain. Glu455 is a catalytic residue.

It belongs to the interleukin-1 receptor family. Forms a ternary complex with IL18 and IL18RAP. Within this complex, IL18R1 is involved in ligand-binding and IL18RAP in signaling leading to NF-kappa-B and JNK activation. Interacts with SLC12A3 in peritoneal macrophages; this interaction is increased by IL18 treatment. N-glycosylated. N-linked glycosyl chains contribute to ligand recognition and intra-receptor interactions required for formation of an active ternary receptor complex. Highly expressed in leukocytes, spleen, lung. Also expressed, but at lower levels, in liver, small intestine, colon, prostate, thymus, placenta, and heart. Specifically coexpressed with IL18R1 in Th1 cells.

It localises to the membrane. The enzyme catalyses NAD(+) + H2O = ADP-D-ribose + nicotinamide + H(+). Its function is as follows. Within the IL18 receptor complex, responsible for the binding of the pro-inflammatory cytokine IL18, but not IL1A nor IL1B. Involved in IL18-mediated IFNG synthesis from T-helper 1 (Th1) cells. Contributes to IL18-induced cytokine production, either independently of SLC12A3, or as a complex with SLC12A3. This Homo sapiens (Human) protein is Interleukin-18 receptor 1.